We begin with the raw amino-acid sequence, 210 residues long: FMN-dependent NADH:quinone oxidoreductase (210 aa).

Residues serine 10 and 16 to 18 (SRS) contribute to the FMN site.

It belongs to the azoreductase type 1 family. Homodimer. The cofactor is FMN.

The catalysed reaction is 2 a quinone + NADH + H(+) = 2 a 1,4-benzosemiquinone + NAD(+). It catalyses the reaction N,N-dimethyl-1,4-phenylenediamine + anthranilate + 2 NAD(+) = 2-(4-dimethylaminophenyl)diazenylbenzoate + 2 NADH + 2 H(+). Quinone reductase that provides resistance to thiol-specific stress caused by electrophilic quinones. Functionally, also exhibits azoreductase activity. Catalyzes the reductive cleavage of the azo bond in aromatic azo compounds to the corresponding amines. This Kineococcus radiotolerans (strain ATCC BAA-149 / DSM 14245 / SRS30216) protein is FMN-dependent NADH:quinone oxidoreductase.